The chain runs to 269 residues: Chymotrypsin-like elastase family member 2A (269 aa).

The first 16 residues, 1-16, serve as a signal peptide directing secretion; the sequence is MIRTLLLSTLVAGALS. Residues 17–28 constitute a propeptide, activation peptide; it reads CGDPTYPPYVTR. The 239-residue stretch at 29 to 267 folds into the Peptidase S1 domain; the sequence is VVGGEEARPN…YIDWINSVIA (239 aa). Residues cysteine 58 and cysteine 74 are joined by a disulfide bond. Residues histidine 73 and aspartate 121 each act as charge relay system in the active site. 3 disulfide bridges follow: cysteine 155–cysteine 222, cysteine 186–cysteine 202, and cysteine 212–cysteine 243. Serine 216 acts as the Charge relay system in catalysis.

The protein belongs to the peptidase S1 family. Elastase subfamily. As to quaternary structure, interacts with CPA1. Interacts with SERPINA1. As to expression, expressed in pancreas. Not detected in keratinocytes. Detected in exocrine secretions of the pancreas (at protein level). Also expressed in a small fraction of cells in pancreatic islets, adrenal cortex, intestinal glands and colonic lymphoid follicles (at protein level). Detected in plasma.

Its subcellular location is the secreted. The catalysed reaction is Preferential cleavage: Leu-|-Xaa, Met-|-Xaa and Phe-|-Xaa. Hydrolyzes elastin.. In terms of biological role, elastase that enhances insulin signaling and might have a physiologic role in cellular glucose metabolism. Circulates in plasma and reduces platelet hyperactivation, triggers both insulin secretion and degradation, and increases insulin sensitivity. The protein is Chymotrypsin-like elastase family member 2A of Homo sapiens (Human).